We begin with the raw amino-acid sequence, 144 residues long: Acidic phospholipase A2 (144 aa).

The first 19 residues, 1 to 19 (MYPAHLLVLLAVCVSLLGA), serve as a signal peptide directing secretion. The propeptide occupies 20-27 (SDIPPLPL). Cystine bridges form between C38/C98, C54/C143, C56/C72, C71/C125, C78/C118, C87/C111, and C105/C116. Positions 55, 57, and 59 each coordinate Ca(2+). H75 is an active-site residue. D76 serves as a coordination point for Ca(2+). D119 is a catalytic residue.

Belongs to the phospholipase A2 family. Group I subfamily. D49 sub-subfamily. Ca(2+) is required as a cofactor. As to expression, expressed by the venom gland.

The protein resides in the secreted. The enzyme catalyses a 1,2-diacyl-sn-glycero-3-phosphocholine + H2O = a 1-acyl-sn-glycero-3-phosphocholine + a fatty acid + H(+). Functionally, PLA2 catalyzes the calcium-dependent hydrolysis of the 2-acyl groups in 3-sn-phosphoglycerides. In Aipysurus laevis (Olive sea snake), this protein is Acidic phospholipase A2.